The following is a 518-amino-acid chain: Glutamate--cysteine ligase (518 aa).

This sequence belongs to the glutamate--cysteine ligase type 1 family. Type 1 subfamily.

The enzyme catalyses L-cysteine + L-glutamate + ATP = gamma-L-glutamyl-L-cysteine + ADP + phosphate + H(+). The protein operates within sulfur metabolism; glutathione biosynthesis; glutathione from L-cysteine and L-glutamate: step 1/2. The polypeptide is Glutamate--cysteine ligase (Salmonella arizonae (strain ATCC BAA-731 / CDC346-86 / RSK2980)).